The following is a 336-amino-acid chain: Probable G-protein coupled receptor 160 (336 aa).

Topologically, residues 1-20 are extracellular; it reads MTALSSKNCSLQYQLHQSPQ. Asn8 carries an N-linked (GlcNAc...) asparagine glycan. Residues 21-41 form a helical membrane-spanning segment; that stretch reads LLEASCLLFLIILGKVLLNIL. At 42 to 56 the chain is on the cytoplasmic side; the sequence is LLRVRRGDARWTLME. Residues 57–77 form a helical membrane-spanning segment; sequence YFCFSLALVDLLLLVNISILT. At 78–95 the chain is on the extracellular side; it reads YFRDFVVLGIRFTRYHIC. A helical membrane pass occupies residues 96–116; sequence LLTQIISFTYGFLHYPVCSLA. Residues 117-136 are Cytoplasmic-facing; that stretch reads CIDYWCNLSRASKQSSRWQK. Residues 137–157 form a helical membrane-spanning segment; the sequence is LLYFLTVILTWISVLAYVLVD. Topologically, residues 158-186 are extracellular; sequence PAISVSLKAHRGYVYQCPAYVSTQSHWLS. The chain crosses the membrane as a helical span at residues 187 to 207; it reads LSMLMVLFVAFLISWQEVVAL. Over 208-243 the chain is Cytoplasmic; the sequence is LQAMRIASYKSKAALYFPFPLHCGYALSCREALLPR. A helical transmembrane segment spans residues 244-264; sequence LIVCFLGTWFPFVALQVLILS. The Extracellular segment spans residues 265–272; the sequence is LRVQIPAY. Residues 273–293 form a helical membrane-spanning segment; it reads IEMNVPWLYFVNSFLIAAVYW. Residues 294–336 are Cytoplasmic-facing; that stretch reads FNCHKLDLRDSSLPVDPFINWKCCFVPVHRLKQVERPMSIVIC.

It belongs to the G-protein coupled receptor 1 family.

It is found in the cell membrane. Functionally, orphan receptor. In Mus musculus (Mouse), this protein is Probable G-protein coupled receptor 160 (Gpr160).